A 1391-amino-acid polypeptide reads, in one-letter code: Nuclear pore complex protein Nup155 (1391 aa).

O-linked (GlcNAc) serine glycosylation occurs at Ser-526. 2 disordered regions span residues Ser-604–Pro-630 and Gln-985–Ser-1012. Ser-1057 carries the phosphoserine modification.

The protein belongs to the non-repetitive/WGA-negative nucleoporin family. As to quaternary structure, interacts with GLE1 and NUP35/NUP53. Able to form a heterotrimer with GLE1 and NUP42 in vitro. Forms a complex with NUP35, NUP93, NUP205 and lamin B. Phosphorylated. Phosphorylation and dephosphorylation may be important for the function of NUP155 and may play a role in the reversible disassembly of the nuclear pore complex during mitosis. Post-translationally, disulfide-linked to NUP62. The inner channel of the NPC has a different redox environment from the cytoplasm and allows the formation of interchain disulfide bonds between some nucleoporins, the significant increase of these linkages upon oxidative stress reduces the permeability of the NPC.

It is found in the nucleus. The protein localises to the nuclear pore complex. Its subcellular location is the nucleus membrane. Functionally, essential component of nuclear pore complex. Could be essessential for embryogenesis. Nucleoporins may be involved both in binding and translocating proteins during nucleocytoplasmic transport. The polypeptide is Nuclear pore complex protein Nup155 (Nup155) (Mus musculus (Mouse)).